Consider the following 338-residue polypeptide: Malate dehydrogenase, mitochondrial (338 aa).

A mitochondrion-targeting transit peptide spans 1-24 (MLSALARPAGAALRRSFSTSAQNN). NAD(+)-binding positions include 31–37 (GASGGIG) and Asp57. An O-linked (GlcNAc) serine glycan is attached at Ser33. Lys78 and Lys91 each carry N6-acetyllysine; alternate. Lys78 and Lys91 each carry N6-succinyllysine; alternate. Substrate-binding residues include Arg104 and Arg110. Residues Asn117 and 140–142 (ISN) contribute to the NAD(+) site. A substrate-binding site is contributed by Asn142. N6-acetyllysine is present on Lys165. Arg176 serves as a coordination point for substrate. Position 185 is an N6-acetyllysine; alternate (Lys185). An N6-succinyllysine; alternate modification is found at Lys185. The active-site Proton acceptor is the His200. The residue at position 203 (Lys203) is an N6-succinyllysine. N6-acetyllysine; alternate occurs at positions 215 and 239. N6-succinyllysine; alternate occurs at positions 215 and 239. Lys239 carries the post-translational modification N6-malonyllysine; alternate. The residue at position 246 (Ser246) is a Phosphoserine. Met251 provides a ligand contact to NAD(+). N6-succinyllysine is present on Lys269. An N6-acetyllysine; alternate mark is found at Lys296, Lys301, Lys307, Lys314, and Lys324. 5 positions are modified to N6-succinyllysine; alternate: Lys296, Lys301, Lys307, Lys314, and Lys324. An N6-malonyllysine; alternate modification is found at Lys307. Ser326 carries the phosphoserine modification. Residues Lys328, Lys329, and Lys335 each carry the N6-acetyllysine; alternate modification. Lys328 carries the N6-succinyllysine; alternate modification. Lys329 bears the N6-malonyllysine; alternate mark. At Lys335 the chain carries N6-succinyllysine; alternate.

It belongs to the LDH/MDH superfamily. MDH type 1 family. In terms of assembly, homodimer. Post-translationally, acetylation is enhanced after treatment either with trichostin A (TCA) or with nicotinamide (NAM) with the appearance of tri- and tetraacetylations. Glucose also increases acetylation.

It is found in the mitochondrion matrix. It catalyses the reaction (S)-malate + NAD(+) = oxaloacetate + NADH + H(+). Its activity is regulated as follows. Enzyme activity is enhanced by acetylation. The chain is Malate dehydrogenase, mitochondrial (MDH2) from Bos taurus (Bovine).